The following is a 297-amino-acid chain: Flavin-dependent thymidylate synthase (297 aa).

Residues 41–251 (GFVRLVDYMG…PLTYAAFVEY (211 aa)) form the ThyX domain. FAD contacts are provided by residues Thr-87, 110–112 (RHR), and Glu-118. DUMP-binding positions include 107 to 110 (QWVR), 118 to 122 (EYSAR), and Arg-190. A ThyX motif motif is present at residues 110-120 (RHRTANVNEYS). FAD is bound by residues 206-208 (DLH) and His-212. Arg-217 provides a ligand contact to dUMP. Arg-217 acts as the Involved in ionization of N3 of dUMP, leading to its activation in catalysis.

This sequence belongs to the thymidylate synthase ThyX family. In terms of assembly, homotetramer. FAD is required as a cofactor.

It catalyses the reaction dUMP + (6R)-5,10-methylene-5,6,7,8-tetrahydrofolate + NADPH + H(+) = dTMP + (6S)-5,6,7,8-tetrahydrofolate + NADP(+). Its pathway is pyrimidine metabolism; dTTP biosynthesis. Functionally, catalyzes the reductive methylation of 2'-deoxyuridine-5'-monophosphate (dUMP) to 2'-deoxythymidine-5'-monophosphate (dTMP) while utilizing 5,10-methylenetetrahydrofolate (mTHF) as the methyl donor, and NADPH and FADH(2) as the reductant. This Ehrlichia ruminantium (strain Gardel) protein is Flavin-dependent thymidylate synthase.